A 450-amino-acid chain; its full sequence is Probable ECA polymerase (450 aa).

The next 11 helical transmembrane spans lie at 6 to 26 (FSGL…LTWF), 37 to 57 (VFFS…TSVL), 63 to 83 (VGVA…CFYA), 118 to 138 (VILM…NGFL), 155 to 175 (GVAL…VYFL), 181 to 201 (AWLF…MIVG), 207 to 227 (IIIA…ISLW), 228 to 248 (MLAA…LKRY), 341 to 361 (LVVM…GLII), 378 to 398 (YKAA…IVLA), and 410 to 430 (VFFI…YWLF).

The protein belongs to the WzyE family. As to quaternary structure, probably part of a complex composed of WzxE, WzyE and WzzE.

Its subcellular location is the cell inner membrane. Its pathway is bacterial outer membrane biogenesis; enterobacterial common antigen biosynthesis. In terms of biological role, probably involved in the polymerization of enterobacterial common antigen (ECA) trisaccharide repeat units. This is Probable ECA polymerase from Escherichia fergusonii (strain ATCC 35469 / DSM 13698 / CCUG 18766 / IAM 14443 / JCM 21226 / LMG 7866 / NBRC 102419 / NCTC 12128 / CDC 0568-73).